Here is a 484-residue protein sequence, read N- to C-terminus: Chromosomal replication initiator protein DnaA (484 aa).

The tract at residues 1-83 (MQPPSQDWAS…LAWRTVWPGI (83 aa)) is domain I, interacts with DnaA modulators. The interval 83–146 (IAEVKVSVRN…EKKAEGEDQN (64 aa)) is domain II. Residues 110–146 (GDQPRPLPKKPAKKKQSVPATPKSTSPEKKAEGEDQN) are disordered. Over residues 116 to 125 (LPKKPAKKKQ) the composition is skewed to basic residues. Residues 135-146 (SPEKKAEGEDQN) show a composition bias toward basic and acidic residues. The segment at 147-364 (QFEERYNFDN…GALNRVVAYA (218 aa)) is domain III, AAA+ region. The ATP site is built by G191, G193, K194, and T195. The tract at residues 365–484 (TLSNRPINMD…VRLLMRQFEG (120 aa)) is domain IV, binds dsDNA.

This sequence belongs to the DnaA family. Oligomerizes as a right-handed, spiral filament on DNA at oriC.

It localises to the cytoplasm. Functionally, plays an essential role in the initiation and regulation of chromosomal replication. ATP-DnaA binds to the origin of replication (oriC) to initiate formation of the DNA replication initiation complex once per cell cycle. Binds the DnaA box (a 9 base pair repeat at the origin) and separates the double-stranded (ds)DNA. Forms a right-handed helical filament on oriC DNA; dsDNA binds to the exterior of the filament while single-stranded (ss)DNA is stabiized in the filament's interior. The ATP-DnaA-oriC complex binds and stabilizes one strand of the AT-rich DNA unwinding element (DUE), permitting loading of DNA polymerase. After initiation quickly degrades to an ADP-DnaA complex that is not apt for DNA replication. Binds acidic phospholipids. The sequence is that of Chromosomal replication initiator protein DnaA from Zymomonas mobilis subsp. mobilis (strain ATCC 31821 / ZM4 / CP4).